The primary structure comprises 179 residues: Isopentenyl-diphosphate Delta-isomerase (179 aa).

Mn(2+)-binding residues include histidine 25 and histidine 31. In terms of domain architecture, Nudix hydrolase spans 29–161 (ELHRAITVYI…PEQFTAWFQL (133 aa)). The active site involves cysteine 66. Cysteine 66 is a binding site for Mg(2+). Position 68 (histidine 68) interacts with Mn(2+). Position 86 (glutamate 86) interacts with Mg(2+). 2 residues coordinate Mn(2+): glutamate 111 and glutamate 113. The active site involves glutamate 113.

It belongs to the IPP isomerase type 1 family. As to quaternary structure, homodimer. It depends on Mg(2+) as a cofactor. Mn(2+) serves as cofactor.

Its subcellular location is the cytoplasm. The enzyme catalyses isopentenyl diphosphate = dimethylallyl diphosphate. The protein operates within isoprenoid biosynthesis; dimethylallyl diphosphate biosynthesis; dimethylallyl diphosphate from isopentenyl diphosphate: step 1/1. Its function is as follows. Catalyzes the 1,3-allylic rearrangement of the homoallylic substrate isopentenyl (IPP) to its highly electrophilic allylic isomer, dimethylallyl diphosphate (DMAPP). The polypeptide is Isopentenyl-diphosphate Delta-isomerase (Pectobacterium atrosepticum (strain SCRI 1043 / ATCC BAA-672) (Erwinia carotovora subsp. atroseptica)).